A 485-amino-acid chain; its full sequence is MATAPVLNQTTNGTISQVIGAVVDVQFPGELPAILTALETENGDTTLVLEVAQHLGENTVRTIAMDGTDGLVRGQEVINTGAQISVPVGPKTLGRIMNVVGEPIDMRGPVGADKANPIHAEAPAFVDQSTDAAILVTGIKVIDLLAPYAKGGKIGLFGGAGVGKTVLIQELINNIAKGHGGVSVFAGVGERTREGNDLYHEFLDAGVIAKNEAGEAISEGSKVALVFGQMNEPPGARARVALSGLTMAEYFRDEEGQDVLFFVDNIFRFTQAGSEVSALLGRIPSAVGYQPTLSTDMGNLQERITSTTKGSITSVQAIYVPADDLTDPAPATSFAHLDATTTLNRAISELGIYPAVDPLDSTSRVLEPRVVGQEHYETARKVQETLQKYKSLQDIIAILGMDELSEEDKLTVARARKIQKFLSQPFHVAEVFTGIPGCFVQIEDTVASFKAVVEGEYDHLPEQAFYMVGGIDDVVEKAKKMAEDA.

158 to 165 (GGAGVGKT) lines the ATP pocket.

The protein belongs to the ATPase alpha/beta chains family. In terms of assembly, F-type ATPases have 2 components, CF(1) - the catalytic core - and CF(0) - the membrane proton channel. CF(1) has five subunits: alpha(3), beta(3), gamma(1), delta(1), epsilon(1). CF(0) has four main subunits: a(1), b(1), b'(1) and c(9-12).

It localises to the cell inner membrane. It catalyses the reaction ATP + H2O + 4 H(+)(in) = ADP + phosphate + 5 H(+)(out). Produces ATP from ADP in the presence of a proton gradient across the membrane. The catalytic sites are hosted primarily by the beta subunits. This is ATP synthase subunit beta from Erythrobacter litoralis (strain HTCC2594).